The chain runs to 257 residues: NAD kinase (257 aa).

Residue Asp-46 is the Proton acceptor of the active site. NAD(+) contacts are provided by residues 46–47, 116–117, Asp-146, Ala-154, and 157–162; these read DG, NE, and TAYNLS.

It belongs to the NAD kinase family. It depends on a divalent metal cation as a cofactor.

It is found in the cytoplasm. It carries out the reaction NAD(+) + ATP = ADP + NADP(+) + H(+). Functionally, involved in the regulation of the intracellular balance of NAD and NADP, and is a key enzyme in the biosynthesis of NADP. Catalyzes specifically the phosphorylation on 2'-hydroxyl of the adenosine moiety of NAD to yield NADP. The sequence is that of NAD kinase from Mesorhizobium japonicum (strain LMG 29417 / CECT 9101 / MAFF 303099) (Mesorhizobium loti (strain MAFF 303099)).